Reading from the N-terminus, the 317-residue chain is 4-hydroxy-3-methylbut-2-enyl diphosphate reductase (317 aa).

Residue cysteine 12 participates in [4Fe-4S] cluster binding. (2E)-4-hydroxy-3-methylbut-2-enyl diphosphate is bound by residues histidine 41 and histidine 74. 2 residues coordinate dimethylallyl diphosphate: histidine 41 and histidine 74. Positions 41 and 74 each coordinate isopentenyl diphosphate. Residue cysteine 96 coordinates [4Fe-4S] cluster. Histidine 124 contributes to the (2E)-4-hydroxy-3-methylbut-2-enyl diphosphate binding site. Position 124 (histidine 124) interacts with dimethylallyl diphosphate. Histidine 124 is an isopentenyl diphosphate binding site. Glutamate 126 functions as the Proton donor in the catalytic mechanism. Threonine 168 is a binding site for (2E)-4-hydroxy-3-methylbut-2-enyl diphosphate. Cysteine 198 is a [4Fe-4S] cluster binding site. Residues serine 226, serine 227, asparagine 228, and serine 270 each contribute to the (2E)-4-hydroxy-3-methylbut-2-enyl diphosphate site. The dimethylallyl diphosphate site is built by serine 226, serine 227, asparagine 228, and serine 270. 4 residues coordinate isopentenyl diphosphate: serine 226, serine 227, asparagine 228, and serine 270.

It belongs to the IspH family. [4Fe-4S] cluster is required as a cofactor.

The catalysed reaction is isopentenyl diphosphate + 2 oxidized [2Fe-2S]-[ferredoxin] + H2O = (2E)-4-hydroxy-3-methylbut-2-enyl diphosphate + 2 reduced [2Fe-2S]-[ferredoxin] + 2 H(+). The enzyme catalyses dimethylallyl diphosphate + 2 oxidized [2Fe-2S]-[ferredoxin] + H2O = (2E)-4-hydroxy-3-methylbut-2-enyl diphosphate + 2 reduced [2Fe-2S]-[ferredoxin] + 2 H(+). The protein operates within isoprenoid biosynthesis; dimethylallyl diphosphate biosynthesis; dimethylallyl diphosphate from (2E)-4-hydroxy-3-methylbutenyl diphosphate: step 1/1. It functions in the pathway isoprenoid biosynthesis; isopentenyl diphosphate biosynthesis via DXP pathway; isopentenyl diphosphate from 1-deoxy-D-xylulose 5-phosphate: step 6/6. In terms of biological role, catalyzes the conversion of 1-hydroxy-2-methyl-2-(E)-butenyl 4-diphosphate (HMBPP) into a mixture of isopentenyl diphosphate (IPP) and dimethylallyl diphosphate (DMAPP). Acts in the terminal step of the DOXP/MEP pathway for isoprenoid precursor biosynthesis. In Hahella chejuensis (strain KCTC 2396), this protein is 4-hydroxy-3-methylbut-2-enyl diphosphate reductase.